We begin with the raw amino-acid sequence, 259 residues long: Phosphatidylglycerol--prolipoprotein diacylglyceryl transferase (259 aa).

Helical transmembrane passes span 12–32, 41–61, 80–100, and 109–129; these read LAIHWYALCILSGLVLAVYLA, ISSDAIFDFILIAFPLAIVGA, IIAIWNGGIAIYGGLITGALV, and VLNPIHFLDIAAPSVMVAQAI. Arg-131 provides a ligand contact to a 1,2-diacyl-sn-glycero-3-phospho-(1'-sn-glycerol). 3 helical membrane-spanning segments follow: residues 167–187, 194–214, and 226–246; these read IPTFLYESLWNLLGFVIIMMW, LLDGEIFAFYLIWYGSGRLVI, and GIRISQYVSALLIIIGLIFVI.

Belongs to the Lgt family.

It localises to the cell membrane. The enzyme catalyses L-cysteinyl-[prolipoprotein] + a 1,2-diacyl-sn-glycero-3-phospho-(1'-sn-glycerol) = an S-1,2-diacyl-sn-glyceryl-L-cysteinyl-[prolipoprotein] + sn-glycerol 1-phosphate + H(+). It functions in the pathway protein modification; lipoprotein biosynthesis (diacylglyceryl transfer). Functionally, catalyzes the transfer of the diacylglyceryl group from phosphatidylglycerol to the sulfhydryl group of the N-terminal cysteine of a prolipoprotein, the first step in the formation of mature lipoproteins. This chain is Phosphatidylglycerol--prolipoprotein diacylglyceryl transferase, found in Streptococcus pyogenes serotype M49 (strain NZ131).